The primary structure comprises 138 residues: Putative pre-16S rRNA nuclease (138 aa).

This sequence belongs to the YqgF nuclease family.

The protein localises to the cytoplasm. Its function is as follows. Could be a nuclease involved in processing of the 5'-end of pre-16S rRNA. The protein is Putative pre-16S rRNA nuclease of Cronobacter sakazakii (strain ATCC BAA-894) (Enterobacter sakazakii).